We begin with the raw amino-acid sequence, 360 residues long: DNA integrity scanning protein DisA (360 aa).

The 139-residue stretch at 11 to 149 (ELDLSSILQF…ENMKYTLKDI (139 aa)) folds into the DAC domain. Residues Gly-78, Leu-96, and 109-113 (MRHRT) each bind ATP.

It belongs to the DisA family. As to quaternary structure, homooligomer. Interacts with RadA. Mg(2+) is required as a cofactor.

It is found in the cytoplasm. It catalyses the reaction 2 ATP = 3',3'-c-di-AMP + 2 diphosphate. Diadenylate cyclase (DAC) activity is inhibited 2-fold by Holliday junction (HJ) DNA, further addition of RecG inhibits DAC activity 11-fold; RecG may relocate DisA from the HJ. DAC is inhibited by the interaction with RadA. Diadenylate cyclase activity is not affected by ssDNA or dsDNA, but three- and four-way junctions strongly inhibit the activity of DisA, suggesting the enzyme is regulated by branched nucleic acids. In terms of biological role, participates in a DNA-damage check-point that is active prior to asymmetric division when DNA is damaged. Forms globular foci that rapidly scan along the chromosomes during sporulation, searching for lesions. Its ability to scan through the chromosome rapidly is due to its non-specific DNA-binding. When a lesion is present, DisA pauses at the lesion site. This triggers a cellular response that culminates in a temporary block in sporulation initiation. It is required, at least partially, to inhibit the activity of the transcription factor spo0A, which controls, among others, early sporulation genes. In B.subtilis c-di-AMP is a second messenger that mediates growth, DNA repair and cell wall homeostasis; it is toxic when present in excess. Limits the replication fork reggression activity of RecG; DisA inhibits the ATPase activity of RecG. By limiting RecG-mediated fork regression, DisA provides time for removal of potentially lethal DNA lesions. One of 3 paralogous diadenylate cyclases (DAC) in this bacteria. Has diadenylate cyclase activity, catalyzing the condensation of 2 ATP molecules into cyclic di-AMP (c-di-AMP). c-di-AMP acts as a signaling molecule that couples DNA integrity with progression of sporulation. The rise in c-di-AMP level generated by DisA while scanning the chromosome operates as a positive signal that advances sporulation; upon encountering a lesion, the DisA focus arrests at the damaged site and halts c-di-AMP synthesis. Does not convert GTP to c-di-GMP. This chain is DNA integrity scanning protein DisA, found in Bacillus subtilis (strain 168).